The chain runs to 315 residues: MEALPQIRQTLSEIDRRIPDALRVAMGLRLRPTAGAALEEVTRIAASCLPRPCPEGGDDPMECDEAAPARALRMEAASCFLPDHDEDTHFVRPEAGVVALADGVGGYRAPGVDAAAFARALMYNAFEMVVATTPGGAGGICPYALLGWAYEQAVSARTQGASTAVILSLAGATLKYAYIGDSAFAVFRDGKLFFRSEAQVHSFNYPFQLSVKNGNSVTSAARGGVEVKEGDVVVAGTDGLFDNVTSEELQRIVAMGRALGLSPKQTADVVAGFAYEASTTMGRDTPFSLESRKKQGTIFRRGKRDDITVVVAYIV.

A PPM-type phosphatase domain is found at 71-314 (ALRMEAASCF…DDITVVVAYI (244 aa)). Residues D102, G103, D238, and D305 each contribute to the Mn(2+) site.

This sequence belongs to the PP2C family. Mg(2+) serves as cofactor. It depends on Mn(2+) as a cofactor.

The enzyme catalyses O-phospho-L-seryl-[protein] + H2O = L-seryl-[protein] + phosphate. The catalysed reaction is O-phospho-L-threonyl-[protein] + H2O = L-threonyl-[protein] + phosphate. The chain is Putative protein phosphatase 2C 24 from Oryza sativa subsp. japonica (Rice).